The following is a 1026-amino-acid chain: Multidrug resistance protein MdtC (1026 aa).

Residues Met-1–Leu-6 are Cytoplasmic-facing. Residues Phe-7–Phe-29 traverse the membrane as a helical segment. Over Arg-30 to Glu-335 the chain is Periplasmic. The helical transmembrane segment at Glu-336–Leu-353 threads the bilayer. Topologically, residues Arg-354–Thr-359 are cytoplasmic. The helical transmembrane segment at Leu-360–Leu-379 threads the bilayer. Residues Cys-380–Ser-388 lie on the Periplasmic side of the membrane. The helical transmembrane segment at Leu-389–Ala-411 threads the bilayer. Residues Arg-412–Glu-430 lie on the Cytoplasmic side of the membrane. Residues Val-431 to Gly-453 traverse the membrane as a helical segment. Topologically, residues Gly-454–Leu-467 are periplasmic. Residues Ser-468–Leu-490 form a helical membrane-spanning segment. At Lys-491–Gln-852 the chain is on the cytoplasmic side. Residues Leu-853 to Val-875 traverse the membrane as a helical segment. The Periplasmic portion of the chain corresponds to His-876–Ala-894. Residues Leu-895 to Val-917 form a helical membrane-spanning segment. Topologically, residues Lys-918–Cys-947 are cytoplasmic. Residues Leu-948–Leu-970 form a helical membrane-spanning segment. The Periplasmic portion of the chain corresponds to Ser-971 to Ile-984. The helical transmembrane segment at Thr-985–Phe-1007 threads the bilayer. The Cytoplasmic segment spans residues Phe-1008–Ile-1026.

The protein belongs to the resistance-nodulation-cell division (RND) (TC 2.A.6) family. MdtC subfamily. Part of a tripartite efflux system composed of MdtA, MdtB and MdtC. MdtC forms a heteromultimer with MdtB.

It localises to the cell inner membrane. This Salmonella typhi protein is Multidrug resistance protein MdtC.